The primary structure comprises 92 residues: MATLRVPLLVALVLLAVAIQTSDAGPYGANVEDSICCQDYIRHPLPSRLVKEFFWTSKSCRKPGVVLITVKNRDICADPRQVWVKKLLHKLS.

The first 24 residues, 1–24 (MATLRVPLLVALVLLAVAIQTSDA), serve as a signal peptide directing secretion. 2 disulfide bridges follow: C36–C60 and C37–C76.

It belongs to the intercrine beta (chemokine CC) family. Expressed by activated splenic B-lymphocytes and dendritic cells. Low expression in lung, thymocytes, lymph node, and unstimulated splenic cells.

It localises to the secreted. In terms of biological role, chemotactic for activated T-lymphocytes. May play an important role in the collaboration of dendritic cells and B-lymphocytes with T-cells in immune responses. The sequence is that of C-C motif chemokine 22 (Ccl22) from Mus musculus (Mouse).